The sequence spans 334 residues: L-lactate dehydrogenase B-B chain (334 aa).

Residues 30–58 (GQVG…VEDK) and Arg100 contribute to the NAD(+) site. Substrate-binding residues include Arg107, Asn139, and Arg170. Residue Asn139 coordinates NAD(+). His194 serves as the catalytic Proton acceptor. Residue Thr249 participates in substrate binding.

This sequence belongs to the LDH/MDH superfamily. LDH family. Homotetramer.

It localises to the cytoplasm. The enzyme catalyses (S)-lactate + NAD(+) = pyruvate + NADH + H(+). Its pathway is fermentation; pyruvate fermentation to lactate; (S)-lactate from pyruvate: step 1/1. This is L-lactate dehydrogenase B-B chain from Danio rerio (Zebrafish).